The sequence spans 262 residues: Cyclin-dependent kinase inhibitor 1 (262 aa).

The disordered stretch occupies residues 140-212 (SDVAEAGSEH…SAQQATRPKI (73 aa)). Residues 160–169 (SGRDRERRET) are compositionally biased toward basic and acidic residues. Over residues 198–208 (SAATASAQQAT) the composition is skewed to low complexity.

This sequence belongs to the CDI family. ICK/KRP subfamily.

This is Cyclin-dependent kinase inhibitor 1 (KRP1) from Oryza sativa subsp. indica (Rice).